Consider the following 751-residue polypeptide: Photosystem I P700 chlorophyll a apoprotein A1 (751 aa).

Helical transmembrane passes span 73-96 (VFSA…FHGA), 159-182 (LYTT…FHYH), 198-222 (LNHH…HVSL), 294-312 (TAHH…GHMY), 349-372 (WHAQ…HHMY), 388-414 (LSLF…IFMV), 436-458 (AIIS…LYIH), and 533-551 (FMVH…LILL). [4Fe-4S] cluster contacts are provided by cysteine 575 and cysteine 584. 2 helical membrane passes run 591–612 (HVFL…HFSW) and 665–687 (LSAY…LDIF). Histidine 676 contacts chlorophyll a'. Positions 683 and 692 each coordinate chlorophyll a. Tryptophan 693 provides a ligand contact to phylloquinone. Residues 725–745 (AVGVAHYLLGGIATTWSFFLA) traverse the membrane as a helical segment.

The protein belongs to the PsaA/PsaB family. As to quaternary structure, the PsaA/B heterodimer binds the P700 chlorophyll special pair and subsequent electron acceptors. PSI consists of a core antenna complex that captures photons, and an electron transfer chain that converts photonic excitation into a charge separation. The eukaryotic PSI reaction center is composed of at least 11 subunits. It depends on P700 is a chlorophyll a/chlorophyll a' dimer, A0 is one or more chlorophyll a, A1 is one or both phylloquinones and FX is a shared 4Fe-4S iron-sulfur center. as a cofactor.

It localises to the plastid. The protein localises to the chloroplast thylakoid membrane. It catalyses the reaction reduced [plastocyanin] + hnu + oxidized [2Fe-2S]-[ferredoxin] = oxidized [plastocyanin] + reduced [2Fe-2S]-[ferredoxin]. In terms of biological role, psaA and PsaB bind P700, the primary electron donor of photosystem I (PSI), as well as the electron acceptors A0, A1 and FX. PSI is a plastocyanin/cytochrome c6-ferredoxin oxidoreductase, converting photonic excitation into a charge separation, which transfers an electron from the donor P700 chlorophyll pair to the spectroscopically characterized acceptors A0, A1, FX, FA and FB in turn. Oxidized P700 is reduced on the lumenal side of the thylakoid membrane by plastocyanin or cytochrome c6. This is Photosystem I P700 chlorophyll a apoprotein A1 from Stigeoclonium helveticum (Green alga).